The primary structure comprises 805 residues: Ubiquitin carboxyl-terminal hydrolase 10-B (805 aa).

Disordered regions lie at residues 136 to 173 (AIPD…YLEG) and 284 to 305 (DTTE…EDTV). Polar residues-rich tracts occupy residues 143 to 153 (NADSDGTSGTG) and 284 to 298 (DTTE…QTLE). The 381-residue stretch at 422 to 802 (RGLINKGNWC…TAYLLYYRRV (381 aa)) folds into the USP domain. The active-site Nucleophile is the C431. The disordered stretch occupies residues 573–600 (EEVNKEEQEGSDEEWEQVGPRNKSSVTR). H756 acts as the Proton acceptor in catalysis.

It belongs to the peptidase C19 family. USP10 subfamily.

The protein resides in the cytoplasm. It localises to the nucleus. The enzyme catalyses Thiol-dependent hydrolysis of ester, thioester, amide, peptide and isopeptide bonds formed by the C-terminal Gly of ubiquitin (a 76-residue protein attached to proteins as an intracellular targeting signal).. In terms of biological role, hydrolase that can remove conjugated ubiquitin from target proteins such as p53/tp53, rps2/us5, rps3/us3, rps10/eS10, becn1, snx3 and cftr. Acts as an essential regulator of p53/tp53 stability: in unstressed cells, specifically deubiquitinates p53/tp53 in the cytoplasm, leading to counteracts MDM2 action and stabilize p53/tp53. Following DNA damage, translocates to the nucleus and deubiquitinates p53/tp53, leading to regulate the p53/TP53-dependent DNA damage response. Component of a regulatory loop that controls autophagy and p53/tp53 levels. Plays a key role in 40S ribosome subunit recycling when a ribosome has stalled during translation: acts both by inhibiting formation of stress granules, which store stalled translation pre-initiation complexes, and mediating deubiquitination of 40S ribosome subunits. Deubiquitinates cftr in early endosomes, enhancing its endocytic recycling. This Xenopus laevis (African clawed frog) protein is Ubiquitin carboxyl-terminal hydrolase 10-B (usp10-b).